The primary structure comprises 387 residues: 3-ketoacyl-CoA thiolase (387 aa).

Cys91 functions as the Acyl-thioester intermediate in the catalytic mechanism. Residues His343 and Cys373 each act as proton acceptor in the active site.

The protein belongs to the thiolase-like superfamily. Thiolase family. In terms of assembly, heterotetramer of two alpha chains (FadB) and two beta chains (FadA).

It is found in the cytoplasm. The catalysed reaction is an acyl-CoA + acetyl-CoA = a 3-oxoacyl-CoA + CoA. The protein operates within lipid metabolism; fatty acid beta-oxidation. Functionally, catalyzes the final step of fatty acid oxidation in which acetyl-CoA is released and the CoA ester of a fatty acid two carbons shorter is formed. This chain is 3-ketoacyl-CoA thiolase, found in Pectobacterium carotovorum subsp. carotovorum (strain PC1).